The chain runs to 394 residues: uncharacterized protein (394 aa).

The F-box domain occupies 7–51; sequence RKVIPNMPDLILRKIFDQYDYPVLCKMERVCRRWTNIINSKFRKE.

This is an uncharacterized protein from Caenorhabditis elegans.